We begin with the raw amino-acid sequence, 424 residues long: CinA-like protein (424 aa).

This sequence belongs to the CinA family.

In Syntrophobacter fumaroxidans (strain DSM 10017 / MPOB), this protein is CinA-like protein.